A 521-amino-acid chain; its full sequence is Glucose-6-phosphate isomerase (521 aa).

The active-site Proton donor is the E327. Active-site residues include H358 and K486.

This sequence belongs to the GPI family.

The protein resides in the cytoplasm. It catalyses the reaction alpha-D-glucose 6-phosphate = beta-D-fructose 6-phosphate. The protein operates within carbohydrate biosynthesis; gluconeogenesis. It participates in carbohydrate degradation; glycolysis; D-glyceraldehyde 3-phosphate and glycerone phosphate from D-glucose: step 2/4. Its function is as follows. Catalyzes the reversible isomerization of glucose-6-phosphate to fructose-6-phosphate. In Bordetella bronchiseptica (strain ATCC BAA-588 / NCTC 13252 / RB50) (Alcaligenes bronchisepticus), this protein is Glucose-6-phosphate isomerase.